The sequence spans 201 residues: MGVKKLSRKDYLNILESILFIDFLKGLSVTLKNLLRRPITTEYPKEKLTPPKRFRGAHGHYVWDGTEPDSLKAIEKFMSYEKAKSRCVACYMCQTACPMPTLFRIEAVQLPNGKKKVVRFDMNLLNCLFCGLCVDACPVGCLTMTDIFELANYSRRNEVLRMEDLEKFAIDFKQRRGNEPDRIWPNDEEREKLWGKIEWSG.

4Fe-4S ferredoxin-type domains follow at residues 78 to 107 and 116 to 147; these read MSYE…RIEA and KVVR…MTDI. Positions 87, 90, 93, 97, 127, 130, 133, and 137 each coordinate [4Fe-4S] cluster.

Belongs to the complex I 23 kDa subunit family. NDH-1 is composed of 14 different subunits. Subunits NuoA, H, J, K, L, M, N constitute the membrane sector of the complex. [4Fe-4S] cluster is required as a cofactor.

The protein localises to the cell inner membrane. It catalyses the reaction a quinone + NADH + 5 H(+)(in) = a quinol + NAD(+) + 4 H(+)(out). Functionally, NDH-1 shuttles electrons from NADH, via FMN and iron-sulfur (Fe-S) centers, to quinones in the respiratory chain. The immediate electron acceptor for the enzyme in this species is believed to be ubiquinone. Couples the redox reaction to proton translocation (for every two electrons transferred, four hydrogen ions are translocated across the cytoplasmic membrane), and thus conserves the redox energy in a proton gradient. This Aquifex aeolicus (strain VF5) protein is NADH-quinone oxidoreductase subunit I.